The sequence spans 389 residues: SH3 and F-BAR domain-containing protein DDB_G0274695 (389 aa).

One can recognise an F-BAR domain in the interval 3–258 (EQFKDNFWGP…VITQIDKLED (256 aa)). A coiled-coil region spans residues 119 to 192 (KLNKERKDME…QDYRDSVNKL (74 aa)). The span at 300 to 328 (LTSSVSSNSLTSSYNSATTTPTPAPRSTP) shows a compositional bias: low complexity. A disordered region spans residues 300–329 (LTSSVSSNSLTSSYNSATTTPTPAPRSTPI). Residues 332–389 (SKKKQAKALYDYVGSDATELDFFAGDIITILDEDESGWFRGELGDRIGLYPSNYCEPI) enclose the SH3 domain.

This chain is SH3 and F-BAR domain-containing protein DDB_G0274695, found in Dictyostelium discoideum (Social amoeba).